A 261-amino-acid chain; its full sequence is Shikimate dehydrogenase (NADP(+)) (261 aa).

Residues 13–15 (SLS) and Thr60 contribute to the shikimate site. Lys64 (proton acceptor) is an active-site residue. Residues Asn85 and Asp100 each coordinate shikimate. NADP(+) is bound by residues 121–125 (GAGGA) and Ile202. A shikimate-binding site is contributed by Tyr204. Residue Gly225 participates in NADP(+) binding.

It belongs to the shikimate dehydrogenase family. Homodimer.

It catalyses the reaction shikimate + NADP(+) = 3-dehydroshikimate + NADPH + H(+). Its pathway is metabolic intermediate biosynthesis; chorismate biosynthesis; chorismate from D-erythrose 4-phosphate and phosphoenolpyruvate: step 4/7. Its function is as follows. Involved in the biosynthesis of the chorismate, which leads to the biosynthesis of aromatic amino acids. Catalyzes the reversible NADPH linked reduction of 3-dehydroshikimate (DHSA) to yield shikimate (SA). The sequence is that of Shikimate dehydrogenase (NADP(+)) from Exiguobacterium sibiricum (strain DSM 17290 / CCUG 55495 / CIP 109462 / JCM 13490 / 255-15).